Consider the following 454-residue polypeptide: Dihydrolipoyllysine-residue succinyltransferase component of 2-oxoglutarate dehydrogenase complex, mitochondrial (454 aa).

The N-terminal 68 residues, 1-68 (MLSRSRCVSR…RFFQTTAVCK (68 aa)), are a transit peptide targeting the mitochondrion. Residues 71–145 (VITVQTPAFA…EGGTPLFTLR (75 aa)) form the Lipoyl-binding domain. Residue Ser82 is modified to Phosphoserine. Position 111 is an N6-lipoyllysine (Lys111). The tract at residues 147–227 (TGAAPAKAKP…KGLRSEHREK (81 aa)) is disordered. Residues 149-163 (AAPAKAKPAETPAPA) are compositionally biased toward low complexity. Lys155 is modified (N6-acetyllysine). Residues 186-197 (PPVPSPSQPPSS) show a composition bias toward pro residues. The segment covering 198 to 217 (KPVSAIKPTAAPPLAEAGAA) has biased composition (low complexity). 5 positions are modified to N6-acetyllysine: Lys268, Lys273, Lys274, Lys278, and Lys308. Catalysis depends on residues His425 and Asp429.

The protein belongs to the 2-oxoacid dehydrogenase family. As to quaternary structure, the 2-oxoglutarate dehydrogenase complex is composed of OGDH (2-oxoglutarate dehydrogenase; E1), DLST (dihydrolipoamide succinyltransferase; E2), DLD (dihydrolipoamide dehydrogenase; E3) and the assembly factor KGD4. It contains multiple copies of the three enzymatic components (E1, E2 and E3). In the nucleus, the 2-oxoglutarate dehydrogenase complex associates with KAT2A. Interacts with ABHD11; this interaction maintains the functional lipoylation of the 2-oxoglutarate dehydrogenase complex. (R)-lipoate serves as cofactor.

It is found in the mitochondrion matrix. Its subcellular location is the nucleus. The enzyme catalyses N(6)-[(R)-dihydrolipoyl]-L-lysyl-[protein] + succinyl-CoA = N(6)-[(R)-S(8)-succinyldihydrolipoyl]-L-lysyl-[protein] + CoA. The protein operates within amino-acid degradation; L-lysine degradation via saccharopine pathway; glutaryl-CoA from L-lysine: step 6/6. It participates in carbohydrate metabolism; tricarboxylic acid cycle. In terms of biological role, dihydrolipoamide succinyltransferase (E2) component of the 2-oxoglutarate dehydrogenase complex. The 2-oxoglutarate dehydrogenase complex catalyzes the overall conversion of 2-oxoglutarate to succinyl-CoA and CO(2). The 2-oxoglutarate dehydrogenase complex is mainly active in the mitochondrion. A fraction of the 2-oxoglutarate dehydrogenase complex also localizes in the nucleus and is required for lysine succinylation of histones: associates with KAT2A on chromatin and provides succinyl-CoA to histone succinyltransferase KAT2A. The sequence is that of Dihydrolipoyllysine-residue succinyltransferase component of 2-oxoglutarate dehydrogenase complex, mitochondrial from Mus musculus (Mouse).